Consider the following 421-residue polypeptide: Alpha-1-antitrypsin-related protein (421 aa).

The signal sequence occupies residues 1–21 (MPFSVSWGILLLAGLCCLVPS). N-linked (GlcNAc...) asparagine glycans are attached at residues asparagine 56, asparagine 110, asparagine 148, and asparagine 274.

This sequence belongs to the serpin family. As to quaternary structure, interacts with CANX and PDIA3. Glycosylated. As to expression, expressed in the liver, leukocytes and testis. Also detected in brain, colon, uterus, esophagus, spleen, trachea, kidney and lung.

The protein resides in the endoplasmic reticulum. Functionally, putative serine protease inhibitor. In Homo sapiens (Human), this protein is Alpha-1-antitrypsin-related protein (SERPINA2).